The following is a 115-amino-acid chain: U3-lycotoxin-Ls1p (115 aa).

The first 20 residues, 1 to 20 (MKFVLLFGVLLVTLFSYSSA), serve as a signal peptide directing secretion. Positions 21–44 (EMFDDFDQADEDELLSLIEKEEAR) are excised as a propeptide. Cystine bridges form between Cys-48/Cys-63, Cys-55/Cys-72, Cys-62/Cys-87, and Cys-74/Cys-85.

Belongs to the neurotoxin 19 (CSTX) family. 01 subfamily. Expressed by the venom gland.

It localises to the secreted. The polypeptide is U3-lycotoxin-Ls1p (Lycosa singoriensis (Wolf spider)).